A 273-amino-acid polypeptide reads, in one-letter code: Hydroxyethylthiazole kinase (273 aa).

Residue Met-47 coordinates substrate. The ATP site is built by Arg-123 and Thr-169. Gly-196 provides a ligand contact to substrate.

The protein belongs to the Thz kinase family. Mg(2+) is required as a cofactor.

The enzyme catalyses 5-(2-hydroxyethyl)-4-methylthiazole + ATP = 4-methyl-5-(2-phosphooxyethyl)-thiazole + ADP + H(+). It participates in cofactor biosynthesis; thiamine diphosphate biosynthesis; 4-methyl-5-(2-phosphoethyl)-thiazole from 5-(2-hydroxyethyl)-4-methylthiazole: step 1/1. In terms of biological role, catalyzes the phosphorylation of the hydroxyl group of 4-methyl-5-beta-hydroxyethylthiazole (THZ). In Desulfotalea psychrophila (strain LSv54 / DSM 12343), this protein is Hydroxyethylthiazole kinase.